The chain runs to 462 residues: L-seryl-tRNA(Sec) selenium transferase (462 aa).

Lys-292 is subject to N6-(pyridoxal phosphate)lysine.

Belongs to the SelA family. Requires pyridoxal 5'-phosphate as cofactor.

The protein resides in the cytoplasm. The catalysed reaction is L-seryl-tRNA(Sec) + selenophosphate + H(+) = L-selenocysteinyl-tRNA(Sec) + phosphate. Its pathway is aminoacyl-tRNA biosynthesis; selenocysteinyl-tRNA(Sec) biosynthesis; selenocysteinyl-tRNA(Sec) from L-seryl-tRNA(Sec) (bacterial route): step 1/1. Functionally, converts seryl-tRNA(Sec) to selenocysteinyl-tRNA(Sec) required for selenoprotein biosynthesis. This chain is L-seryl-tRNA(Sec) selenium transferase, found in Geobacter sulfurreducens (strain ATCC 51573 / DSM 12127 / PCA).